Here is a 208-residue protein sequence, read N- to C-terminus: MLDYIPWIGNGYRYGNGYKGVAGAGHSATNGSPAGNTSSTTQSNDVAPTFSNVGVGLKANVQGTLGDSQTTTVGGHQWPTLDPANLQLWTGAEWRNDSKTQNNTTTNENHTKFASATGSGQQQGSTTTTSAGNPDSLKQDKADKSGNSISVQEATSGDNLTNYTNLPPNLTPTSDWPNALSFTNKNNAQRAQLFLRGLLGSIPVLVNN.

Disordered regions lie at residues 29–49 (TNGS…VAPT) and 97–172 (DSKT…NLTP). Positions 100 to 132 (TQNNTTTNENHTKFASATGSGQQQGSTTTTSAG) are enriched in low complexity. Residues 145-158 (SGNSISVQEATSGD) are compositionally biased toward polar residues. Residues 159 to 172 (NLTNYTNLPPNLTP) are compositionally biased toward low complexity.

It belongs to the adhesin P1 family.

The protein is Putative adhesin P1-like protein MPN_468 of Mycoplasma pneumoniae (strain ATCC 29342 / M129 / Subtype 1) (Mycoplasmoides pneumoniae).